The sequence spans 122 residues: Ribonuclease pancreatic (122 aa).

Positions 1 to 16 are enriched in basic and acidic residues; that stretch reads ETPAEKFQRQHMDTEH. Positions 1-20 are disordered; sequence ETPAEKFQRQHMDTEHSTAS. Substrate-binding residues include lysine 6 and arginine 9. The active-site Proton acceptor is the histidine 11. 4 disulfides stabilise this stretch: cysteine 25-cysteine 83, cysteine 39-cysteine 94, cysteine 57-cysteine 109, and cysteine 64-cysteine 71. Residues 40-44, lysine 65, and arginine 84 contribute to the substrate site; that span reads KPLNT. The Proton donor role is filled by histidine 117.

This sequence belongs to the pancreatic ribonuclease family. As to quaternary structure, monomer. Interacts with and forms tight 1:1 complexes with RNH1. Dimerization of two such complexes may occur. Interaction with RNH1 inhibits this protein. Post-translationally, not glycosylated although the sequence N-V-T, a recognition site for carbohydrate attachment, is present. Pancreas.

Its subcellular location is the secreted. It carries out the reaction an [RNA] containing cytidine + H2O = an [RNA]-3'-cytidine-3'-phosphate + a 5'-hydroxy-ribonucleotide-3'-[RNA].. The enzyme catalyses an [RNA] containing uridine + H2O = an [RNA]-3'-uridine-3'-phosphate + a 5'-hydroxy-ribonucleotide-3'-[RNA].. Endonuclease that catalyzes the cleavage of RNA on the 3' side of pyrimidine nucleotides. Acts on single-stranded and double-stranded RNA. The protein is Ribonuclease pancreatic (RNASE1) of Osphranter rufus (Red kangaroo).